The chain runs to 807 residues: DNA gyrase subunit B (807 aa).

The Toprim domain maps to 429–543 (SELFIVEGDS…KGYLYIAQPP (115 aa)). Mg(2+) contacts are provided by glutamate 435, aspartate 508, and aspartate 510.

It belongs to the type II topoisomerase GyrB family. As to quaternary structure, heterotetramer, composed of two GyrA and two GyrB chains. In the heterotetramer, GyrA contains the active site tyrosine that forms a transient covalent intermediate with DNA, while GyrB binds cofactors and catalyzes ATP hydrolysis. It depends on Mg(2+) as a cofactor. Requires Mn(2+) as cofactor. Ca(2+) serves as cofactor.

The protein localises to the cytoplasm. It catalyses the reaction ATP-dependent breakage, passage and rejoining of double-stranded DNA.. Functionally, a type II topoisomerase that negatively supercoils closed circular double-stranded (ds) DNA in an ATP-dependent manner to modulate DNA topology and maintain chromosomes in an underwound state. Negative supercoiling favors strand separation, and DNA replication, transcription, recombination and repair, all of which involve strand separation. Also able to catalyze the interconversion of other topological isomers of dsDNA rings, including catenanes and knotted rings. Type II topoisomerases break and join 2 DNA strands simultaneously in an ATP-dependent manner. In Rickettsia typhi (strain ATCC VR-144 / Wilmington), this protein is DNA gyrase subunit B.